We begin with the raw amino-acid sequence, 590 residues long: MATIRRLQQTLSHLRPPKAPQLLSIVEGPTQPELLDITLGELLTLQSLQYGDYECLVFPWTGARWTYTDLKDEADRVARGLLAMGIQKGDRIGIMAGNCEQYISVFFAAARVGAILVVLNNTYTPSELYYALGHTDCRLLFLTPRIGRHSLEEVLAKLGPRPKEQGTSSALEEIIILRGQYSGFSTYEHVIQRGLPLPSHALQDREAELHSTDVCNLQFTSGSTGNPKAAMLTHHNLVNNSRFIGDRMNLTSFDILCCPPPLFHCFGLVLGMLAVVTHGSKIIFPSETFDPTAVLHAISDEKCTALHGVPTMFEAILSLPKPPNFDCSNLRTGIIAGAPVPRPLMKRLLEELNMTEYTSSYGLTEASPTCFNALTTDSIERRLTTVGKVMPHAKAKIIDTQGHIVPIGQRGELCIAGYQLTKGYWNNPEKTAEALITDSDGVTWLKTGDEAIFDEEGYCSITGRFKDIIIRGGENIYPLEIEERLAAHPAIEVASVIGIPDQKYGEVVGAFLALAADVSARPSDEELRAWTRETLGRHKAPQYFFVFGEEGVDRTIPVTGSGKVRKVDLRKIAASVLERRLAKTAAIKEK.

The PTS2-type peroxisomal targeting signal signature appears at 6–14 (RLQQTLSHL). ATP-binding positions include 220-228 (TSGSTGNPK), 359-364 (SSYGLT), aspartate 449, and arginine 464. Residue threonine 364 coordinates substrate. CoA is bound by residues 472-474 (GGE) and 543-545 (YFF). Lysine 563 serves as a coordination point for ATP.

This sequence belongs to the ATP-dependent AMP-binding enzyme family.

The protein localises to the peroxisome. Its pathway is siderophore biosynthesis. In terms of biological role, acyl-CoA ligase; part of the siderophore biosynthetic pathway. Aspergillus fumigatus produces 4 types of siderophores, low-molecular-mass iron chelators, including excreted fusarinine C (FsC) and triacetylfusarinine C (TAFC) for iron uptake and intacellular ferricrocin (FC) for hyphal and hydroxyferricrocin (HFC) for conidial iron distribution and storage. TAFC consists of 3 N(2)-acetyl-N(5)-anhydromevalonyl-N(5)-hydroxyornithine residues cyclically linked by ester bonds; FC is a cyclic hexapeptide with the structure Gly-Ser-Gly-(N(5)-acetyl-N(5)-hydroxyornithine)x3. The biosynthesis of all four siderophores depends on the hydroxylation of ornithine, catalyzed by the monooxygenase sidA. Subsequently, the pathways for biosynthesis of extra- and intracellular siderophores split. For biosynthesis of extracellular siderophores, the transacylase sidF transfers anhydromevalonyl to N(5)-hydroxyornithine. The required anhydromevalonyl-CoA moiety is derived from mevalonate by CoA ligation and dehydration catalyzed by sidI and sidH respectively. The acetylation of N(5)-hydroxyornithine for FC biosynthesis involves the constitutively expressed sidL. FC is hydroxylated to HFC by an as yet uncharacterized enzyme during conidiation. Assembly of fusarinine C (FsC) and FC is catalyzed by two different nonribosomal peptide synthetases (NRPS), sidD and sidC respectively. Subsequently, sidG catalyzes N2-acetylation of FsC for forming TAFC. Both extra- and intracellular siderophores are crucial for growth during iron limitation and virulence. The protein is Acyl-CoA ligase sidI of Aspergillus fumigatus (strain ATCC MYA-4609 / CBS 101355 / FGSC A1100 / Af293) (Neosartorya fumigata).